Reading from the N-terminus, the 247-residue chain is Probable transcriptional regulatory protein DvMF_3201 (247 aa).

Residues 1–21 (MAGHSKWANIQHRKGRQDAKR) form a disordered region.

Belongs to the TACO1 family.

It is found in the cytoplasm. This is Probable transcriptional regulatory protein DvMF_3201 from Nitratidesulfovibrio vulgaris (strain DSM 19637 / Miyazaki F) (Desulfovibrio vulgaris).